The chain runs to 474 residues: MSIQAPPRLLELAGQSLLRDQALSISAMEELPRVLYLPLFMEAFSRRHFQTLTVMVQAWPFTCLPLGSLMKTLHLETLKALLEGLHMLLTQKDRPRRWKLQVLDLRDVDENFWARWPGAWALSCFPETTSKRQTAEDCPRMGEHQPLKVFIDICLKEIPQDECLRYLFQWVYQRRGLVHLCCSKLVNYLTPIKYLRKSLKIIYLNSIQELEIRNMSWPRLIRKLRCYLKEMKNLRKLVFSRCHHYTSDNELEGRLVAKFSSVFLRLEHLQLLKIKLITFFSGHLEQLIRCLQNPLENLELTYGYLLEEDMKCLSQYPSLGYLKHLNLSYVLLFRISLEPLGALLEKIAASLKTLILEGCQIHYSQLSAILPGLSRCSQLTTFYFGRNCMSIDALKDLLRHTSGLSKLSLETYPAPEESLNSLVRVNWEIFTPLRAELMCTLREVRQPKRIFIGPTPCPSCGSSPSEELELHLCC.

An LRR 1; degenerate repeat occupies 97 to 124 (RWKLQVLDLRDVDENFWARWPGAWALSC). The LRR 2; degenerate repeat unit spans residues 179–203 (HLCCSKLVNYLTPIKYLRKSLKIIY). The LRR 3; degenerate repeat unit spans residues 204 to 230 (LNSIQELEIRNMSWPRLIRKLRCYLKE). Residues 231–265 (MKNLRKLVFSRCHHYTSDNELEGRLVAKFSSVFLR) form an LRR 4; degenerate repeat. 5 LRR repeats span residues 266–291 (LEHL…IRCL), 292–323 (QNPL…GYLK), 324–342 (HLNL…PLGA), 348–375 (AASL…GLSR), and 376–400 (CSQL…LLRH).

Belongs to the PRAME family.

This is PRAME family member 1 from Homo sapiens (Human).